Here is a 561-residue protein sequence, read N- to C-terminus: MGILDSLKKPVNIKSSLPKFSRSATSINLSSHPVSSRSFLELPPELFSITKPIFKLLQAHANKIYFQSSDAEAVWNVKDSSGHVFEAESISLLGSHIIITNSSVQVADVAIIDSPSNINQCEISSVGEFLQFNNGQLSITCNDFGLLEKFKRLCMISIFEFISIYKALTGTVISSYGLRMSDMHIILNSPFNFKDWCEVYLDGQGWVKVWCHIDKVSKTNNSKSSSDNDAKGKYQIRFYRDDKSTSSKNCVFFIPDNEYVQDIFFYNINAAEPSKNMNDFFQGLQMIKLVGNVRFCSDTDFNDVVDSGSIYSSANNGSGDSSSTALNNESPNTTPKSRTFFSPKGHRRNSSHVSSLTSRSTKKPITNFTTRTNGLLIRPLPHHGVHHLEAMIRFIIPLMDCARLYGRPVQFKTERTDINSLMFGLPKLPSVDYFAEEEIAHLMTQEFNPLKEKDTDDTMALTMSRFSSYLQERMTKVSKRNTELNFRTFSDVMGMYNTTRDHSKLNCMSDKDNSVKEFSLSDKSNVSSETTNMMNQLQVNAHEYKSSMCERPIVASTSPIA.

Positions 314 to 323 (ANNGSGDSSS) are enriched in low complexity. The interval 314–366 (ANNGSGDSSSTALNNESPNTTPKSRTFFSPKGHRRNSSHVSSLTSRSTKKPIT) is disordered. Positions 324 to 340 (TALNNESPNTTPKSRTF) are enriched in polar residues. Ser514 is subject to Phosphoserine.

It is found in the cytoplasm. This is an uncharacterized protein from Saccharomyces cerevisiae (strain ATCC 204508 / S288c) (Baker's yeast).